A 569-amino-acid polypeptide reads, in one-letter code: Membrane protein insertase YidC (569 aa).

Residues 6–26 (FVLFLIFATSLLFLWDAWQKE) traverse the membrane as a helical segment. Composition is skewed to polar residues over residues 32 to 52 (QGPKTAVQGTETQANTGTAGT) and 62 to 74 (LASSVPQRGSTAE). Residues 32–81 (QGPKTAVQGTETQANTGTAGTAETPVPGDQLASSVPQRGSTAENGAPVRA) form a disordered region. Helical transmembrane passes span 348–368 (VVDYGWLTVIGAPLFWLLSLF), 375–395 (WGVAIILLTMSVKLAFFPLSA), 442–462 (GGCLPILVQIPVFISLYWVLL), 479–499 (LSAPDPYYVLPVIMGISMFLQ), and 519–539 (PLAFSVFFFFFPAGLVLYSLV).

This sequence belongs to the OXA1/ALB3/YidC family. Type 1 subfamily. As to quaternary structure, interacts with the Sec translocase complex via SecD. Specifically interacts with transmembrane segments of nascent integral membrane proteins during membrane integration.

Its subcellular location is the cell inner membrane. Functionally, required for the insertion and/or proper folding and/or complex formation of integral membrane proteins into the membrane. Involved in integration of membrane proteins that insert both dependently and independently of the Sec translocase complex, as well as at least some lipoproteins. Aids folding of multispanning membrane proteins. This Nitrosospira multiformis (strain ATCC 25196 / NCIMB 11849 / C 71) protein is Membrane protein insertase YidC.